Consider the following 436-residue polypeptide: MSHLDDLPSTPGKYKTDKVPPYGILHHHRYLRLSKLTLWASLFLALFLFYLVLSPPPSPSRRNLNDSSSISAAKYGGSHWEKQVRKSARPRSHGGLTVLVTGASGFVGTHVSIALRRRGDGVLGLDNFNRYYDPKLKRARQGLLERSGVFVVEGDINDAVLLRKLFDVVLFTHVMHLAAQAGVRYAMQNPGSYVNSNIAGFVNLLEVSKSANPQPAIVWASSSSVYGLNSKVPFSEKDRTDQPASLYAATKKAGEGIAHTYNHIYGLSLTGLRFFTVYGPWGRPDMAYFFFTKDILKGKTITVFESPDKGSVARDFTYIDDIVKGCLGALDTAEKSTGSGGKKKGPAMFRIYNLGNTSPVPVTKLVTILEKLLKMKAKKKIMPLPRNGDVEFTHANITLAQAELGYKPAVDLETGLKKFVKWYMGFYTGSKKKSSW.

The next 2 helical transmembrane spans lie at 36 to 56 (LTLWASLFLALFLFYLVLSPP) and 95 to 115 (GLTVLVTGASGFVGTHVSIAL). 97–128 (TVLVTGASGFVGTHVSIALRRRGDGVLGLDNF) is a binding site for NAD(+). Y247 acts as the Proton acceptor in catalysis.

The protein belongs to the NAD(P)-dependent epimerase/dehydratase family. In terms of assembly, homodimer. As to expression, in leaves, pollen and siliques, but not in roots or flowers.

The protein resides in the golgi apparatus. It is found in the golgi stack membrane. The enzyme catalyses UDP-alpha-D-glucuronate = UDP-alpha-D-galacturonate. Its function is as follows. Involved in the synthesis of the negatively charged monosaccharide that forms the backbone of pectic cell wall components. The chain is UDP-glucuronate 4-epimerase 5 (GAE5) from Arabidopsis thaliana (Mouse-ear cress).